Here is a 219-residue protein sequence, read N- to C-terminus: uncharacterized protein (219 aa).

Basic and acidic residues-rich tracts occupy residues M1 to R20, A30 to V39, and Q156 to R170. Residues M1–G195 are disordered.

Belongs to the MISP family.

This is an uncharacterized protein from Homo sapiens (Human).